A 140-amino-acid chain; its full sequence is Large ribosomal subunit protein uL11 (140 aa).

The protein belongs to the universal ribosomal protein uL11 family. Part of the ribosomal stalk of the 50S ribosomal subunit. Interacts with L10 and the large rRNA to form the base of the stalk. L10 forms an elongated spine to which L12 dimers bind in a sequential fashion forming a multimeric L10(L12)X complex. Post-translationally, one or more lysine residues are methylated.

Functionally, forms part of the ribosomal stalk which helps the ribosome interact with GTP-bound translation factors. The chain is Large ribosomal subunit protein uL11 from Symbiobacterium thermophilum (strain DSM 24528 / JCM 14929 / IAM 14863 / T).